A 765-amino-acid chain; its full sequence is Carboxysome assembly protein CsoS2 (765 aa).

Residues 1-22 (MSTKTSREIALERRKAMSDGGK) are compositionally biased toward basic and acidic residues. 2 disordered regions span residues 1–107 (MSTK…RTDV) and 165–229 (REAQ…NKNG). The interval 1–215 (MSTKTSREIA…RSKTGSTSKQ (215 aa)) is N-terminal domain. An N-repeat 1 repeat occupies 7–22 (REIALERRKAMSDGGK). Residues 38 to 63 (SQDINSTGATSSNKKVLTSPSKSNIP) show a composition bias toward polar residues. Basic and acidic residues predominate over residues 77–87 (SSKELGIERRK). N-repeat repeat units follow at residues 79–94 (KELGIERRKAMSTHGK), 158–173 (RDIVLARREAQSKHGK), and 196–211 (REISQRVRELRSKTGS). Basic and acidic residues predominate over residues 187 to 207 (RRGDPDLSSREISQRVRELRS). The middle region stretch occupies residues 216-586 (GNGKCRPCGP…LSNCETPPND (371 aa)). M-repeat repeat units lie at residues 240-289 (KVGK…GQFC), 300-349 (RASV…KKYC), 358-397 (KVMQSITTDGLKVSGSLPGRSSLVTGDESGSGKQLTGDQY), 411-460 (KVGS…EKFC), 470-519 (KVGL…NDNC), and 530-580 (RATV…LSNC). 2 disordered regions span residues 306 to 328 (TTSGNKVTGNEVGRSEKVTGDEP) and 367 to 413 (GLKV…EKVG). Residues 589–734 (YANQEKSASN…AMPPVDNKRN (146 aa)) are C-terminal domain. 2 C-repeat repeats span residues 604-648 (SVNS…GTEQ) and 677-711 (KKEPSKITGEGQSAGNITGDDWDRGDKVTGTEGVS). Disordered regions lie at residues 611–637 (EKYSAKNTEGVTGNRYEDSSKITGPFD) and 656–765 (NMTY…GARG). Residues 730 to 741 (DNKRNDETEKPD) are compositionally biased toward basic and acidic residues. Residues 735–765 (DETEKPDFLITGSSGNTRDGQLVTFSGGARG) form a C-terminal peptide region.

The protein belongs to the CsoS2 family. As to quaternary structure, probably interacts with the carboxysome major shell protein CsoS1 via the N-terminal domain. A CsoS1-CsoS1D-CsoS2 complex can be isolated following expression in E.coli. Interacts via its N-terminal repeats with RuBisCO. In terms of processing, unlike H.neapolitanus and predictions for P.marinus strain MIT 9313, this protein is not thought to have ribosomal frameshifting.

It localises to the carboxysome. Its function is as follows. Required for alpha-carboxysome (Cb) assembly, mediates interaction between RuBisCO and the Cb shell. The protein is probably highly flexible. The C-terminal repeats act as the encapsulation signal to target proteins to the Cb; they are necessary and sufficient to target both CsoS2 and foreign proteins to the Cb. The N-terminal repeats of this protein bind simultaneously to both subunits of RuBisCO. Probably also interacts with the major shell proteins (CsoS1); that interaction would increase the local concentration of CsoS2 so that it can condense RuBisCO and full carboxysomes can be formed. There are estimated to be 163 CsoS2 proteins per carboxysome; unlike H.neapolitanus only 1 form is seen. The polypeptide is Carboxysome assembly protein CsoS2 (Prochlorococcus marinus subsp. pastoris (strain CCMP1986 / NIES-2087 / MED4)).